Consider the following 446-residue polypeptide: Phosphoglucosamine mutase (446 aa).

The Phosphoserine intermediate role is filled by Ser-99. Ser-99, Asp-242, Asp-244, and Asp-246 together coordinate Mg(2+). Phosphoserine is present on Ser-99.

This sequence belongs to the phosphohexose mutase family. Requires Mg(2+) as cofactor. Post-translationally, activated by phosphorylation.

It carries out the reaction alpha-D-glucosamine 1-phosphate = D-glucosamine 6-phosphate. Catalyzes the conversion of glucosamine-6-phosphate to glucosamine-1-phosphate. In Campylobacter concisus (strain 13826), this protein is Phosphoglucosamine mutase.